Consider the following 401-residue polypeptide: MEGFSRDLLCGIGKGGDGPRGEVRPRVDMEAEEVELNLGLSLGGRFGLDRRGEKLARSSSVAAILAAPTEPSAPPSGLFRTSSLPTVAAAEAAKKQGVDELNCRRPSGGAEAEPAAARLPASGSPSSGSSDGEGRRLEVNMTDTLMRTSSLPAGIEDEWRKRKEAQSLKRLEVKRKRIERRNSLTSNISKEAVGQILEEMNAGAEKVESCDDVATGNKKTGGNVNHSSDRNRCTGLPPVHRATYTQQRGSLSGIPTKHIPAMKGSADAEEHNVPSAATEHRNGAAIATPPFSALAVRAVALASRGEQLRATGRVAARAKSMGDVERIMMQEMPCVCTKGLPNGKRVEGFLYKYRKGEEVRIVCVCHGSFLTPAEFVKHAGGGDVANPLRHIVVNPIPPSLY.

2 disordered regions span residues 95–135 and 215–238; these read KQGV…GEGR and TGNK…GLPP. A compositionally biased stretch (low complexity) spans 105 to 130; the sequence is RPSGGAEAEPAAARLPASGSPSSGSS. The segment covering 217 to 226 has biased composition (polar residues); sequence NKKTGGNVNH.

It belongs to the Ninja family. As to quaternary structure, interacts with BZIP46, TPR3 and PUB70.

The protein resides in the nucleus. Acts as a negative regulator of abscisic acid (ABA) signaling and drought tolerance. Mediates deactivation and degradation of BZIP46, a positive regulator of ABA signaling and drought stress tolerance. Represses BZIP46 activity via interaction with the TPR3-HDAC1 corepressor complex and down-regulation of the histone acetylation level at BZIP46 target genes. Promotes BZIP46 degradation via interaction with the U-box type ubiquitin E3 ligase PUB70. This chain is Ninja-family protein MODD, found in Oryza sativa subsp. japonica (Rice).